Reading from the N-terminus, the 739-residue chain is Phosphoribosylformylglycinamidine synthase subunit PurL (739 aa).

The active site involves His-54. Residues Tyr-57 and Lys-96 each contribute to the ATP site. Position 98 (Glu-98) interacts with Mg(2+). Substrate is bound by residues 99 to 102 and Arg-121; that span reads SHNH. Catalysis depends on His-100, which acts as the Proton acceptor. Mg(2+) is bound at residue Asp-122. Substrate is bound at residue Gln-245. Asp-273 is a binding site for Mg(2+). 317–319 lines the substrate pocket; that stretch reads ESQ. ATP-binding residues include Asp-500 and Gly-537. Residue Asn-538 participates in Mg(2+) binding. Ser-540 contributes to the substrate binding site.

Belongs to the FGAMS family. Monomer. Part of the FGAM synthase complex composed of 1 PurL, 1 PurQ and 2 PurS subunits.

The protein localises to the cytoplasm. The catalysed reaction is N(2)-formyl-N(1)-(5-phospho-beta-D-ribosyl)glycinamide + L-glutamine + ATP + H2O = 2-formamido-N(1)-(5-O-phospho-beta-D-ribosyl)acetamidine + L-glutamate + ADP + phosphate + H(+). The protein operates within purine metabolism; IMP biosynthesis via de novo pathway; 5-amino-1-(5-phospho-D-ribosyl)imidazole from N(2)-formyl-N(1)-(5-phospho-D-ribosyl)glycinamide: step 1/2. In terms of biological role, part of the phosphoribosylformylglycinamidine synthase complex involved in the purines biosynthetic pathway. Catalyzes the ATP-dependent conversion of formylglycinamide ribonucleotide (FGAR) and glutamine to yield formylglycinamidine ribonucleotide (FGAM) and glutamate. The FGAM synthase complex is composed of three subunits. PurQ produces an ammonia molecule by converting glutamine to glutamate. PurL transfers the ammonia molecule to FGAR to form FGAM in an ATP-dependent manner. PurS interacts with PurQ and PurL and is thought to assist in the transfer of the ammonia molecule from PurQ to PurL. The protein is Phosphoribosylformylglycinamidine synthase subunit PurL of Bacillus cereus (strain B4264).